A 79-amino-acid polypeptide reads, in one-letter code: Eumenine mastoparan-OD (79 aa).

An N-terminal signal peptide occupies residues 1-24 (MKQTIVIVLLAAVAMMACLQMVAA). 5 AXPX repeats span residues 24-27 (AEPL), 30-33 (AAPA), 44-47 (ASPI), 52-55 (ANPE), and 58-61 (ASPE). Positions 25–62 (EPLPEAAPAPSPLAEAEALASPIAEALANPEALASPEA) are excised as a propeptide. At leucine 76 the chain carries Leucine amide.

As to expression, expressed by the venom gland.

It is found in the secreted. The protein resides in the target cell membrane. Functionally, antimicrobial peptide with strong activity against the fungi C.albicans (MIC=6 uM) and B.cinerea (MIC=10 uM), and weaker activity against the Gram-negative bacterium E.coli (MIC=97 uM) and Gram-positive bacterium S.aureus (MIC=97 uM). Shows cytolytic activity against insect cell lines. Has potent hemolytic activity against ovine erythrocytes (80% at 50 uM), but has no hemolytic activity against human erythrocytes. In vivo, peptide injection in the vicinity of the head and thorax of lepidopteran larvae induces feeding disorder that lasts one or two days before recovering. This is Eumenine mastoparan-OD from Orancistrocerus drewseni (Solitary wasp).